Here is a 24-residue protein sequence, read N- to C-terminus: 60 kDa chaperonin, mitochondrial (24 aa).

It belongs to the chaperonin (HSP60) family. As to quaternary structure, forms a single seven-member ring complex, in tight association with the p63 protein. In terms of tissue distribution, testis.

The protein localises to the mitochondrion. Its function is as follows. Implicated in mitochondrial protein import and macromolecular assembly. May facilitate the correct folding of imported proteins. May also prevent misfolding and promote the refolding and proper assembly of unfolded polypeptides generated under stress conditions in the mitochondrial matrix. This chain is 60 kDa chaperonin, mitochondrial, found in Heliothis virescens (Tobacco budworm moth).